Consider the following 423-residue polypeptide: UPF0229 protein Pput_0430 (423 aa).

The interval 81 to 108 (EFTAGEHIPRPQGGGGGGGRGKAGNSGE) is disordered. Positions 92 to 107 (QGGGGGGGRGKAGNSG) are enriched in gly residues.

It belongs to the UPF0229 family.

This chain is UPF0229 protein Pput_0430, found in Pseudomonas putida (strain ATCC 700007 / DSM 6899 / JCM 31910 / BCRC 17059 / LMG 24140 / F1).